Reading from the N-terminus, the 411-residue chain is 2,3-bisphosphoglycerate-independent phosphoglycerate mutase (411 aa).

The protein belongs to the BPG-independent phosphoglycerate mutase family. A-PGAM subfamily.

It catalyses the reaction (2R)-2-phosphoglycerate = (2R)-3-phosphoglycerate. It participates in carbohydrate degradation; glycolysis; pyruvate from D-glyceraldehyde 3-phosphate: step 3/5. Functionally, catalyzes the interconversion of 2-phosphoglycerate and 3-phosphoglycerate. This is 2,3-bisphosphoglycerate-independent phosphoglycerate mutase from Pyrobaculum calidifontis (strain DSM 21063 / JCM 11548 / VA1).